A 734-amino-acid chain; its full sequence is Photosystem I P700 chlorophyll a apoprotein A2 (734 aa).

The next 8 membrane-spanning stretches (helical) occupy residues 46–69 (IFASHLGQLAIIFLWTSGNLFHVA), 135–158 (LYTGAFSLLIVSTLFLVAGWLHLE), 175–199 (LNHHLSGLFGVSSLARAGHLVHVAI), 273–291 (IAHHHLAIAVVFIIAGHTY), 330–353 (LHFQLGLALASLGVVTSLVAQHMY), 369–395 (AALYTHHQYIAGFIMTGAFAHGAIFLT), 417–439 (AIISHLSWASLFLGFHTLGLYVH), and 517–535 (FPVHHAIASGLHTTTLILS). [4Fe-4S] cluster is bound by residues cysteine 559 and cysteine 568. The next 2 helical transmembrane spans lie at 575-596 (AFYPAVFWMLNTIGWVTLHWHW) and 643-665 (LSVWAWMFSFGHLVWATGFMFLI). The chlorophyll a site is built by histidine 654, methionine 662, and tyrosine 670. Tryptophan 671 provides a ligand contact to phylloquinone. Residues 707 to 727 (LVGLAHFSVGYIFTYAAFPIP) form a helical membrane-spanning segment.

Belongs to the PsaA/PsaB family. The PsaA/B heterodimer binds the P700 chlorophyll special pair and subsequent electron acceptors. PSI consists of a core antenna complex that captures photons, and an electron transfer chain that converts photonic excitation into a charge separation. The eukaryotic PSI reaction center is composed of at least 11 subunits. P700 is a chlorophyll a/chlorophyll a' dimer, A0 is one or more chlorophyll a, A1 is one or both phylloquinones and FX is a shared 4Fe-4S iron-sulfur center. is required as a cofactor.

Its subcellular location is the plastid. It is found in the chloroplast thylakoid membrane. The enzyme catalyses reduced [plastocyanin] + hnu + oxidized [2Fe-2S]-[ferredoxin] = oxidized [plastocyanin] + reduced [2Fe-2S]-[ferredoxin]. PsaA and PsaB bind P700, the primary electron donor of photosystem I (PSI), as well as the electron acceptors A0, A1 and FX. PSI is a plastocyanin-ferredoxin oxidoreductase, converting photonic excitation into a charge separation, which transfers an electron from the donor P700 chlorophyll pair to the spectroscopically characterized acceptors A0, A1, FX, FA and FB in turn. Oxidized P700 is reduced on the lumenal side of the thylakoid membrane by plastocyanin. This Selaginella uncinata (Blue spike-moss) protein is Photosystem I P700 chlorophyll a apoprotein A2.